The chain runs to 192 residues: Transcription antitermination protein NusB (192 aa).

The protein belongs to the NusB family.

Its function is as follows. Involved in transcription antitermination. Required for transcription of ribosomal RNA (rRNA) genes. Binds specifically to the boxA antiterminator sequence of the ribosomal RNA (rrn) operons. The chain is Transcription antitermination protein NusB from Lactococcus lactis subsp. lactis (strain IL1403) (Streptococcus lactis).